A 240-amino-acid polypeptide reads, in one-letter code: Ribonuclease 3 (240 aa).

In terms of domain architecture, RNase III spans 9 to 141 (VEEFQKETGI…LLAAIYLDQG (133 aa)). Glu-54 provides a ligand contact to Mg(2+). The active site involves Asp-58. Residues Asp-127 and Glu-130 each coordinate Mg(2+). Glu-130 is an active-site residue. Residues 168–237 (DYKTALQEIV…ARIAYEKLLK (70 aa)) enclose the DRBM domain.

The protein belongs to the ribonuclease III family. As to quaternary structure, homodimer. The cofactor is Mg(2+).

The protein resides in the cytoplasm. The enzyme catalyses Endonucleolytic cleavage to 5'-phosphomonoester.. Digests double-stranded RNA. Involved in the processing of primary rRNA transcript to yield the immediate precursors to the large and small rRNAs (23S and 16S). Also processes some mRNAs, and tRNAs when they are encoded in the rRNA operon. Probably processes pre-crRNA and tracrRNA of type II CRISPR loci if present in the organism. This chain is Ribonuclease 3 (rnc), found in Thermotoga maritima (strain ATCC 43589 / DSM 3109 / JCM 10099 / NBRC 100826 / MSB8).